Consider the following 81-residue polypeptide: Large ribosomal subunit protein bL31B (81 aa).

Belongs to the bacterial ribosomal protein bL31 family. Type B subfamily. As to quaternary structure, part of the 50S ribosomal subunit.

This is Large ribosomal subunit protein bL31B from Listeria innocua serovar 6a (strain ATCC BAA-680 / CLIP 11262).